The following is a 21-amino-acid chain: Peptide PGLa-BM2 (21 aa).

The residue at position 21 (Ala-21) is an Alanine amide.

In terms of tissue distribution, expressed by the skin glands.

It localises to the secreted. Its function is as follows. Antimicrobial peptide. This is Peptide PGLa-BM2 from Xenopus boumbaensis (Mawa clawed frog).